We begin with the raw amino-acid sequence, 143 residues long: NADH-quinone oxidoreductase subunit A (143 aa).

The next 3 helical transmembrane spans lie at 8–28, 63–83, and 93–113; these read FGNV…GYLT, FYVV…LYPW, and FALI…AYAW.

This sequence belongs to the complex I subunit 3 family. NDH-1 is composed of 14 different subunits. Subunits NuoA, H, J, K, L, M, N constitute the membrane sector of the complex.

The protein resides in the cell inner membrane. The enzyme catalyses a quinone + NADH + 5 H(+)(in) = a quinol + NAD(+) + 4 H(+)(out). In terms of biological role, NDH-1 shuttles electrons from NADH, via FMN and iron-sulfur (Fe-S) centers, to quinones in the respiratory chain. The immediate electron acceptor for the enzyme in this species is believed to be a menaquinone. Couples the redox reaction to proton translocation (for every two electrons transferred, four hydrogen ions are translocated across the cytoplasmic membrane), and thus conserves the redox energy in a proton gradient. In Pelodictyon phaeoclathratiforme (strain DSM 5477 / BU-1), this protein is NADH-quinone oxidoreductase subunit A.